Here is a 283-residue protein sequence, read N- to C-terminus: Secretory carrier-associated membrane protein 2 (283 aa).

The tract at residues 1–47 (MARHDPNPFADEEINPFANHTSVPPASNSYLKPLPPEPYDRGATVDI) is disordered. The Cytoplasmic segment spans residues 1 to 123 (MARHDPNPFA…LQKIQYVAFT (123 aa)). A compositionally biased stretch (polar residues) spans 18–30 (ANHTSVPPASNSY). Residues 50-87 (DSGNDLRAKEMELQAKENELKRKEQELKRREDAIARTG) are a coiled coil. Transmembrane regions (helical) follow at residues 124 to 144 (TLLG…VAWI), 151 to 171 (IWLL…VLWY), 186 to 206 (FGAF…AAVA), and 234 to 254 (IMYF…IWVI). The Cytoplasmic portion of the chain corresponds to 255 to 283 (QQVYAYFRGSGKAAEMKREATKSTLMRAL).

Belongs to the SCAMP family.

The protein localises to the cell membrane. The protein resides in the cytoplasmic vesicle. Its subcellular location is the secretory vesicle membrane. In terms of biological role, probably involved in membrane trafficking. This chain is Secretory carrier-associated membrane protein 2 (SCAMP2), found in Arabidopsis thaliana (Mouse-ear cress).